Consider the following 421-residue polypeptide: UDP-glucuronic acid decarboxylase 1 (421 aa).

Over 1 to 19 (MVRTRIQRLLTGINRRMMK) the chain is Cytoplasmic. A helical membrane pass occupies residues 20–40 (LLIALALIAYVASVWGNFVNM). The Lumenal portion of the chain corresponds to 41-421 (SKSIQENGEQ…RVKKGRTRHN (381 aa)). Residues Gly-99, Phe-100, Val-101, Asp-120, Asn-121, Phe-123, Thr-124, Gly-125, Asp-145, and Val-146 each coordinate NAD(+). UDP-alpha-D-glucuronate-binding residues include Leu-150 and Tyr-151. NAD(+) contacts are provided by Leu-160 and Ser-162. Residue Lys-178 coordinates UDP-alpha-D-glucuronate. Thr-179 is an NAD(+) binding site. Asn-186, Gly-189, Lys-192, and Arg-193 together coordinate UDP-alpha-D-glucuronate. Residues Ala-201, Tyr-232, and Lys-236 each contribute to the NAD(+) site. Tyr-232 functions as the Proton acceptor in the catalytic mechanism. 3 residues coordinate UDP-alpha-D-glucuronate: Tyr-246, Gln-249, and Glu-250. The NAD(+) site is built by Thr-262, His-268, and Arg-273. Asn-317 and Asn-386 each carry an N-linked (GlcNAc...) asparagine glycan. The tract at residues 400 to 421 (ANNQYIPKPKPARVKKGRTRHN) is disordered. Over residues 409-421 (KPARVKKGRTRHN) the composition is skewed to basic residues.

It belongs to the NAD(P)-dependent epimerase/dehydratase family. UDP-glucuronic acid decarboxylase subfamily. In terms of assembly, homodimer and homotetramer. NAD(+) is required as a cofactor.

It localises to the golgi apparatus. The protein localises to the golgi stack membrane. It carries out the reaction UDP-alpha-D-glucuronate + H(+) = UDP-alpha-D-xylose + CO2. It participates in nucleotide-sugar biosynthesis; UDP-alpha-D-xylose biosynthesis; UDP-alpha-D-xylose from UDP-alpha-D-glucuronate: step 1/1. Catalyzes the NAD-dependent decarboxylation of UDP-glucuronic acid to UDP-xylose. Necessary for the biosynthesis of the core tetrasaccharide in glycosaminoglycan biosynthesis. The chain is UDP-glucuronic acid decarboxylase 1 (uxs1) from Xenopus tropicalis (Western clawed frog).